A 151-amino-acid chain; its full sequence is Large ribosomal subunit protein bL9 (151 aa).

Belongs to the bacterial ribosomal protein bL9 family.

Its function is as follows. Binds to the 23S rRNA. The sequence is that of Large ribosomal subunit protein bL9 from Mycobacteroides abscessus (strain ATCC 19977 / DSM 44196 / CCUG 20993 / CIP 104536 / JCM 13569 / NCTC 13031 / TMC 1543 / L948) (Mycobacterium abscessus).